The sequence spans 327 residues: Ribose operon repressor (327 aa).

Residues 1–56 (MTTIKQVALEAGVSKSTVSRFIAQNGYVSDEAREKIERAIKKLNFRPNLSAQSLKT) form the HTH lacI-type domain. A DNA-binding region (H-T-H motif) is located at residues 4–23 (IKQVALEAGVSKSTVSRFIA).

Its function is as follows. Transcriptional repressor for the ribose rbsDACBK operon. This is Ribose operon repressor (rbsR) from Lactococcus lactis subsp. lactis (strain IL1403) (Streptococcus lactis).